The primary structure comprises 330 residues: Peptide transport system ATP-binding protein SapD (330 aa).

The 254-residue stretch at 6 to 259 folds into the ABC transporter domain; it reads IRNLTIEFKT…PHHPYTQALI (254 aa). 40–47 contributes to the ATP binding site; sequence GESGSGKS.

Belongs to the ABC transporter superfamily.

Its subcellular location is the cell inner membrane. Involved in a peptide intake transport system that plays a role in the resistance to antimicrobial peptides. This chain is Peptide transport system ATP-binding protein SapD, found in Salmonella typhimurium (strain LT2 / SGSC1412 / ATCC 700720).